The chain runs to 170 residues: Archaemetzincin (170 aa).

Residue His110 coordinates Zn(2+). Residue Glu111 is the Proton acceptor of the active site. Zn(2+)-binding residues include His114, His120, Cys121, Cys125, Cys144, and Cys147.

Belongs to the peptidase M54 family. As to quaternary structure, monomer. It depends on Zn(2+) as a cofactor.

Functionally, probable zinc metalloprotease whose natural substrate is unknown. This is Archaemetzincin from Nanoarchaeum equitans (strain Kin4-M).